Reading from the N-terminus, the 159-residue chain is Ribosomal RNA large subunit methyltransferase H (159 aa).

S-adenosyl-L-methionine is bound by residues Leu-76, Gly-108, and 127–132 (FSKMTF).

Belongs to the RNA methyltransferase RlmH family. In terms of assembly, homodimer.

It localises to the cytoplasm. It carries out the reaction pseudouridine(1915) in 23S rRNA + S-adenosyl-L-methionine = N(3)-methylpseudouridine(1915) in 23S rRNA + S-adenosyl-L-homocysteine + H(+). Specifically methylates the pseudouridine at position 1915 (m3Psi1915) in 23S rRNA. This Geobacillus kaustophilus (strain HTA426) protein is Ribosomal RNA large subunit methyltransferase H.